A 298-amino-acid chain; its full sequence is MTDSHYIGRFAPSPSGELHFGSLIAALGSYLQARAQRGIWRVRIEDIDPPREVPGAAATILRQLEHYGLHWDGEVLWQSQRHEAYREALAWLHEQGLSYYCTCPRSRIQRLGGIYDGHCRTLCHGPENAAVRIKQQHPVMHFHDALRGDIQADPQLASEDFIIHRRDGLFAYNLAVVVDDHFQGVTEIVRGADLIEPTVRQLSLYKQFGWRAPGYVHLPLALNEQGAKLSKQNHAPALATGDPRPVLVQALRFLGQRDVVAWQEMSVEELLRFAVTHWRLTAVPTSANVNPAFSNASR.

Residues R9–S13 and E45 contribute to the L-glutamate site. A 'HIGH' region motif is present at residues P12–S22. Residues C101, C103, Y115, and C119 each contribute to the Zn(2+) site. Residues Y172 and R190 each contribute to the L-glutamate site. The 'KMSKS' region motif lies at K228 to Q232. K231 is an ATP binding site.

This sequence belongs to the class-I aminoacyl-tRNA synthetase family. GluQ subfamily. It depends on Zn(2+) as a cofactor.

Catalyzes the tRNA-independent activation of glutamate in presence of ATP and the subsequent transfer of glutamate onto a tRNA(Asp). Glutamate is transferred on the 2-amino-5-(4,5-dihydroxy-2-cyclopenten-1-yl) moiety of the queuosine in the wobble position of the QUC anticodon. The polypeptide is Glutamyl-Q tRNA(Asp) synthetase (Salmonella paratyphi A (strain ATCC 9150 / SARB42)).